The chain runs to 434 residues: T-box transcription factor T homolog (434 aa).

The T-box DNA-binding region spans 50–220 (LWKKFHKLTN…YNPFAKAFLD (171 aa)). Polar residues-rich tracts occupy residues 355–364 (SGFSHVSSPQ) and 376–385 (HPTSSHQHNL). The disordered stretch occupies residues 355–385 (SGFSHVSSPQSPLPTGLFRNPHPTSSHQHNL).

In terms of tissue distribution, in the developing embryo, expressed in the mesenchyme founder cells, vegetal plate of the mesenchyme blastula, extending tip of the invaginating archenteron and, later, in the secondary mesenchyme cells.

The protein localises to the nucleus. Involved in the transcriptional regulation of genes required for mesoderm differentiation. This chain is T-box transcription factor T homolog, found in Hemicentrotus pulcherrimus (Sea urchin).